The sequence spans 138 residues: Acidic phospholipase A2 ammodytin I1 (138 aa).

Residues 1–16 form the signal peptide; sequence MRILWIVAVCLIGAEG. Disulfide bonds link Cys42–Cys131, Cys44–Cys60, Cys59–Cys111, Cys65–Cys138, Cys66–Cys104, Cys73–Cys97, and Cys91–Cys102. Tyr43, Gly45, and Gly47 together coordinate Ca(2+). The active site involves His63. Asp64 contacts Ca(2+). The active site involves Asp105.

Belongs to the phospholipase A2 family. Group II subfamily. D49 sub-subfamily. The cofactor is Ca(2+). Expressed by the venom gland.

The protein resides in the secreted. The enzyme catalyses a 1,2-diacyl-sn-glycero-3-phosphocholine + H2O = a 1-acyl-sn-glycero-3-phosphocholine + a fatty acid + H(+). Its function is as follows. Snake venom phospholipase A2 (PLA2) that has enzymatic activity but is non-toxic. PLA2 catalyzes the calcium-dependent hydrolysis of the 2-acyl groups in 3-sn-phosphoglycerides. This is Acidic phospholipase A2 ammodytin I1 from Vipera ammodytes ammodytes (Western sand viper).